The following is a 167-amino-acid chain: 6,7-dimethyl-8-ribityllumazine synthase (167 aa).

5-amino-6-(D-ribitylamino)uracil is bound by residues Phe24, 58–60 (ALE), and 82–84 (AVV). 87 to 88 (ET) is a (2S)-2-hydroxy-3-oxobutyl phosphate binding site. The Proton donor role is filled by His90. Asn115 is a 5-amino-6-(D-ribitylamino)uracil binding site. Arg129 lines the (2S)-2-hydroxy-3-oxobutyl phosphate pocket.

Belongs to the DMRL synthase family.

The enzyme catalyses (2S)-2-hydroxy-3-oxobutyl phosphate + 5-amino-6-(D-ribitylamino)uracil = 6,7-dimethyl-8-(1-D-ribityl)lumazine + phosphate + 2 H2O + H(+). The protein operates within cofactor biosynthesis; riboflavin biosynthesis; riboflavin from 2-hydroxy-3-oxobutyl phosphate and 5-amino-6-(D-ribitylamino)uracil: step 1/2. Catalyzes the formation of 6,7-dimethyl-8-ribityllumazine by condensation of 5-amino-6-(D-ribitylamino)uracil with 3,4-dihydroxy-2-butanone 4-phosphate. This is the penultimate step in the biosynthesis of riboflavin. This chain is 6,7-dimethyl-8-ribityllumazine synthase, found in Cupriavidus pinatubonensis (strain JMP 134 / LMG 1197) (Cupriavidus necator (strain JMP 134)).